The primary structure comprises 223 residues: Carnitine transport permease protein OpuCD (223 aa).

In terms of domain architecture, ABC transmembrane type-1 spans 22–202 (FWRHFLMSAY…VMAILADVLL (181 aa)). The next 5 helical transmembrane spans lie at 27-47 (LMSA…GVYI), 63-83 (IIQT…MGLG), 87-107 (VVLS…YTGI), 148-168 (ALVI…GGLG), and 182-202 (AIIL…DVLL).

It belongs to the binding-protein-dependent transport system permease family. The complex is composed of two ATP-binding proteins (OpuCA), two transmembrane proteins (OpuCB and OpuCD) and a solute-binding protein (OpuCC).

Its subcellular location is the cell membrane. Its function is as follows. Part of the ABC transporter complex OpuCABCD involved in carnitine uptake. Probably responsible for the translocation of the substrate across the membrane. Involved, with BetL and GbuABC, in osmoprotection and cryoprotection of Listeria. Can also mediate weak glycine betaine transport. This Listeria monocytogenes serotype 1/2a (strain 10403S) protein is Carnitine transport permease protein OpuCD (opuCD).